The sequence spans 544 residues: 4-coumarate:CoA ligase 1 (544 aa).

This sequence belongs to the ATP-dependent AMP-binding enzyme family. Monomer. As to expression, mostly expressed in flower organs, with highest levels in corollas, and, to a lesser extent, in tubes, sepals, pistils, stamen and ovaries. Also present at low levels in leaves.

It localises to the cytoplasm. It is found in the cytosol. It catalyses the reaction (E)-4-coumarate + ATP + CoA = (E)-4-coumaroyl-CoA + AMP + diphosphate. The enzyme catalyses (E)-caffeate + ATP + CoA = (E)-caffeoyl-CoA + AMP + diphosphate. The catalysed reaction is benzoate + ATP + CoA = benzoyl-CoA + AMP + diphosphate. It carries out the reaction (E)-cinnamate + ATP + CoA = (E)-cinnamoyl-CoA + AMP + diphosphate. It catalyses the reaction (E)-ferulate + ATP + CoA = (E)-feruloyl-CoA + AMP + diphosphate. It participates in phenylpropanoid metabolism; trans-cinnamate biosynthesis. The protein operates within phytoalexin biosynthesis; 3,4',5-trihydroxystilbene biosynthesis; 3,4',5-trihydroxystilbene from trans-4-coumarate: step 1/2. Catalyzes the formation of CoA esters of trans-cinnamic acid, 4-coumaric acid, ferulic acid, benzoic acid and caffeic acid. The chain is 4-coumarate:CoA ligase 1 from Petunia hybrida (Petunia).